Consider the following 438-residue polypeptide: Diaminopimelate decarboxylase (438 aa).

N6-(pyridoxal phosphate)lysine is present on Lys-73. Residues Ser-217, Gly-254, and 294-297 (EPGR) contribute to the pyridoxal 5'-phosphate site. Substrate contacts are provided by Arg-297, Arg-333, and Tyr-337. The Proton donor role is filled by Cys-362. The substrate site is built by Glu-363 and Tyr-391. Position 391 (Tyr-391) interacts with pyridoxal 5'-phosphate.

The protein belongs to the Orn/Lys/Arg decarboxylase class-II family. LysA subfamily. Homodimer. Pyridoxal 5'-phosphate serves as cofactor.

The catalysed reaction is meso-2,6-diaminopimelate + H(+) = L-lysine + CO2. It functions in the pathway amino-acid biosynthesis; L-lysine biosynthesis via DAP pathway; L-lysine from DL-2,6-diaminopimelate: step 1/1. Its activity is regulated as follows. Competitively inhibited by the substrate analog azelaic acid in vitro but not in vivo. Its function is as follows. Specifically catalyzes the decarboxylation of meso-diaminopimelate (meso-DAP) to L-lysine. In Methanocaldococcus jannaschii (strain ATCC 43067 / DSM 2661 / JAL-1 / JCM 10045 / NBRC 100440) (Methanococcus jannaschii), this protein is Diaminopimelate decarboxylase.